The following is a 313-amino-acid chain: Glutaminase (313 aa).

The substrate site is built by Ser73, Asn123, Glu167, Asn174, Tyr198, Tyr249, and Val267.

This sequence belongs to the glutaminase family. As to quaternary structure, homotetramer.

It carries out the reaction L-glutamine + H2O = L-glutamate + NH4(+). This chain is Glutaminase, found in Streptomyces avermitilis (strain ATCC 31267 / DSM 46492 / JCM 5070 / NBRC 14893 / NCIMB 12804 / NRRL 8165 / MA-4680).